The following is a 273-amino-acid chain: Thiazole synthase (273 aa).

The Schiff-base intermediate with DXP role is filled by K111. Residues G172, 198–199 (AG), and 220–221 (NS) each bind 1-deoxy-D-xylulose 5-phosphate. The interval 251 to 273 (RLPRRGQASASSPTTGLISGKDK) is disordered. Residues 258 to 267 (ASASSPTTGL) show a composition bias toward polar residues.

Belongs to the ThiG family. Homotetramer. Forms heterodimers with either ThiH or ThiS.

The protein localises to the cytoplasm. The catalysed reaction is [ThiS sulfur-carrier protein]-C-terminal-Gly-aminoethanethioate + 2-iminoacetate + 1-deoxy-D-xylulose 5-phosphate = [ThiS sulfur-carrier protein]-C-terminal Gly-Gly + 2-[(2R,5Z)-2-carboxy-4-methylthiazol-5(2H)-ylidene]ethyl phosphate + 2 H2O + H(+). The protein operates within cofactor biosynthesis; thiamine diphosphate biosynthesis. Its function is as follows. Catalyzes the rearrangement of 1-deoxy-D-xylulose 5-phosphate (DXP) to produce the thiazole phosphate moiety of thiamine. Sulfur is provided by the thiocarboxylate moiety of the carrier protein ThiS. In vitro, sulfur can be provided by H(2)S. This is Thiazole synthase from Synechococcus sp. (strain CC9902).